The sequence spans 1378 residues: DNA-directed RNA polymerase subunit beta (1378 aa).

It belongs to the RNA polymerase beta chain family. As to quaternary structure, the RNAP catalytic core consists of 2 alpha, 1 beta, 1 beta' and 1 omega subunit. When a sigma factor is associated with the core the holoenzyme is formed, which can initiate transcription.

It carries out the reaction RNA(n) + a ribonucleoside 5'-triphosphate = RNA(n+1) + diphosphate. Its function is as follows. DNA-dependent RNA polymerase catalyzes the transcription of DNA into RNA using the four ribonucleoside triphosphates as substrates. This chain is DNA-directed RNA polymerase subunit beta, found in Campylobacter jejuni subsp. jejuni serotype O:23/36 (strain 81-176).